The sequence spans 248 residues: Proteasome subunit alpha (248 aa).

Residue serine 2 is modified to N-acetylserine; partial.

It belongs to the peptidase T1A family. In terms of assembly, the 20S proteasome core is composed of 14 alpha and 14 beta subunits that assemble into four stacked heptameric rings, resulting in a barrel-shaped structure. The two inner rings, each composed of seven catalytic beta subunits, are sandwiched by two outer rings, each composed of seven alpha subunits. The catalytic chamber with the active sites is on the inside of the barrel. Has a gated structure, the ends of the cylinder being occluded by the N-termini of the alpha-subunits. Is capped by the proteasome-associated ATPase, ARC.

Its subcellular location is the cytoplasm. Its pathway is protein degradation; proteasomal Pup-dependent pathway. Its activity is regulated as follows. The formation of the proteasomal ATPase ARC-20S proteasome complex, likely via the docking of the C-termini of ARC into the intersubunit pockets in the alpha-rings, may trigger opening of the gate for substrate entry. Interconversion between the open-gate and close-gate conformations leads to a dynamic regulation of the 20S proteasome proteolysis activity. Functionally, component of the proteasome core, a large protease complex with broad specificity involved in protein degradation. The sequence is that of Proteasome subunit alpha from Mycobacterium tuberculosis (strain CDC 1551 / Oshkosh).